The primary structure comprises 1331 residues: MSSKEQQAAGRDFKRNSNAYSSLPPTGTGAGCSGAALGSGTGTGKRARSKQHQLEHEQFGLSNSLSSESIRQACAYYDDELSDEDLIEIQQTPQAFHQQTKQPLQLQPISFRLGDELGDERSAFCGSQEMQQVPLSTPIKQAAETDEALCVLSELDAILDVHDVSQLNGTCSSGSVNSGSDDDKVEDYLMDLDNYLEEMDNALNREDSLIIIDGHTSLKREPRTRTLPLSRKKKSSKKKSEDQEAAQGDFQREHQLRKTFSCSLRPTSQIASSSGSLETSTEPVMDVWRRQSMRRALEQEDTKATVAMEREEDDIPTLLVELPPRRDAEMRRCFSQGDCQASVAPTVGSQMLTEAHIFDNLLQTNARASSEEPRPRQYGRRLEGPPTPVRPLILAQSRPQSAPTRVQMREPQLQDTPTHPIMSTCSELSSARSSRMPSPVSLPSDSSSSGSSSAEHDQEPDPVQTTTMCSASSTTPLEPLHQLQLLLREKCGFNSQWPHAGSRTLALIGCTLGVFNMCRFAVLTINFGGNFLLQFLLLSVIFGIPLLWLQMCLGAKIRAGPVSMWKISPICAGVGIALVMQQCFLALYSTVSLAWILVYLRDVFPTAARSGYRWQEMAFPYRYDASNATGNLTQTVAEYFNVVVLQRLHLANHPDASGIRFHVNDRQLAFYLALIWAAVFLILCKGLKSLGKLAYIIYTLPLVALAVVTAKFVYVVDPSRIQNIFAASDFDDFLVNSNSWTAATQETFLTWGLLGASVIAITSRSHTNANKAALRRDAILLVLFTLIGLGLMALLALCCAQILWQHGYVYVPGSFENPDCYTSIYSLQSNTNPYLLSYPRSLIPHYSSFIGETYRRNRTMIHVESGFQALRFISEIFPAVLSLASDSISWVWAAVAFATFAGFGLAQLCVMWKPISSALGNSTSSVLLSCVTGLLLSIPFATEMGISILYYVDFLLGGSWFIPIIWTAQIFGVFLIRGRPYNGDDLVNDLRLCGSMSAFLALSWNVLLPIGLITLSVVDYKASLSNQFYYWRGKSYFTYWSRKMGSLIQIGVLLVIPVTAIIQIYRYLAHGPPDILERIQLLYRPPEEGEEPRRPSARQTASQSRRNALGQTTEGGQHDAQNDAPPKYTPPPSYTTATGARLAKLLRQSIRRSVRRVLGDSSRTRPVLSLDAESASPAAPPDYLTILTNPAGSSFNADPSPASSSSPESIEIDQRPVGYSQRSQSLGRKLHRSGASTLERRPYTAEDVVTILRSSVRHRQSQGGGNLVTASTLPRPPTAAMSTHLEDASFRSIENLVLNAEPPDRTPGVELELELEAGQAEECARNNTSVI.

Positions 1–62 (MSSKEQQAAG…QLEHEQFGLS (62 aa)) are disordered. Residues 16 to 25 (NSNAYSSLPP) are compositionally biased toward polar residues. Residues 28 to 43 (TGAGCSGAALGSGTGT) are compositionally biased toward gly residues. N-linked (GlcNAc...) asparagine glycosylation occurs at N168. Disordered regions lie at residues 221-284 (EPRT…TEPV) and 363-473 (QTNA…SASS). Over residues 258–282 (KTFSCSLRPTSQIASSSGSLETSTE) the composition is skewed to polar residues. Basic and acidic residues predominate over residues 369-383 (SSEEPRPRQYGRRLE). Residues 413-436 (LQDTPTHPIMSTCSELSSARSSRM) are compositionally biased toward polar residues. Positions 437-453 (PSPVSLPSDSSSSGSSS) are enriched in low complexity. The segment covering 463 to 473 (VQTTTMCSASS) has biased composition (polar residues). The next 3 membrane-spanning stretches (helical) occupy residues 505 to 525 (LALI…VLTI), 531 to 551 (FLLQ…WLQM), and 567 to 587 (ISPI…FLAL). N-linked (GlcNAc...) asparagine glycosylation is found at N627 and N631. Helical transmembrane passes span 667 to 687 (QLAF…CKGL), 696 to 716 (IIYT…VYVV), 741 to 761 (TAAT…VIAI), and 778 to 798 (AILL…LALC). N857 is a glycosylation site (N-linked (GlcNAc...) asparagine). A helical transmembrane segment spans residues 890–910 (WVWAAVAFATFAGFGLAQLCV). A glycan (N-linked (GlcNAc...) asparagine) is linked at N921. 4 helical membrane passes run 926–946 (VLLS…EMGI), 956–976 (LGGS…VFLI), 998–1018 (AFLA…LSVV), and 1044–1064 (MGSL…IIQI). 3 disordered regions span residues 1086–1136 (PEEG…SYTT), 1169–1238 (SLDA…ASTL), and 1256–1275 (VRHR…TLPR). Polar residues-rich tracts occupy residues 1097–1115 (ARQT…TTEG) and 1186–1196 (ILTNPAGSSFN). Over residues 1197–1209 (ADPSPASSSSPES) the composition is skewed to low complexity.

Belongs to the sodium:neurotransmitter symporter (SNF) (TC 2.A.22) family.

The protein resides in the membrane. Its function is as follows. Putative sodium-dependent transporter which is required for viability, early imaginal disk development and adult motor coordination. Also has a role in the fate commitment of the R3/R4 photoreceptor cells. May function in ommatidial polarity by regulating the activity of the core polarity genes, acting upstream of (or in parallel to) Vang, dsh, pk, stan, and dgo, but downstream or independently of fz. This chain is Sodium-dependent transporter bedraggled, found in Drosophila melanogaster (Fruit fly).